The following is a 965-amino-acid chain: MENTPSHINKTEPSLDKTYSPQEIEQPLYEHWEKQGYFKPNGDTSKESYCIMIPPPNVTGSLHMGHAFQQTIMDTLIRYQRMQGKNTLWQAGTDHAGIATQMVVERKIAAEEGKTRHDYGRDAFIDKIWEWKGESGGTITRQMRRLGNSVDWERERFTMDEGLSNAVKEVFVRLHKEDLIYRGKRLVNWDPKLRTAISDLEVENRESKGSMWHLRYPLADGAKTAEGKDYLVVATTRPETVLGDTGVAVNPEDPRYKDLIGKEVILPLVGRRIPILGDEHADMEKGTGCVKITPAHDFNDYEVGKRHALPMINILTFDGDIRSEAEVFDTHGEATDAFSNAIPAQFQGLERFAARKAVVAEFEKLGLLEEVKPHDLTVPYGDRGGVVIEPMLTDQWYVHTAPLAKVAIEAVENGEIQFVPKQYENMYYSWMRDIQDWCISRQLWWGHRIPAWYDEQGNVYVGRDEAEVRRDNNLGAEVALRQDEDVLDTWFSSGLWTFSTLGWPEQTDALKTFHPTSVVVSGFDIIFFWIARMIMLTMHFMKDENGKPQVPFKTVYMTGLIRDDEGQKMSKSKGNVIDPLDMVDGISLEALLEKRTGNMMQPQLAEKIRKRTEKQFPNGIEPHGTDALRFTLAALASTGRDINWDMKRLEGYRNFCNKLWNASRFVLMNTEGQDCGQNGGEMVLSLADRWILAEFNQTIKAYREAMDTYRFDLAAGILYEFTWNQFCDWYLELTKPVMNSGSEAELRGTRHTLIQVLEALLRLAHPIIPYITETIWQRVKNLKGITADTIMLQPFPEYDASQVDEQALSDLEWIKQTIIAVRNIRAEMNIAPGKPLEVMLRGANAQAQRRVLENQSFIQSLARLSSLTLLAEGDKGPVSVTKLVEGAEVLIPMAGLIDKATELDRLAKEVAKLDAEIERIEGKLGNEGFVARAPEAVVAKERERLAACAEAKQKLIEQQATIAAL.

Residues 1-22 (MENTPSHINKTEPSLDKTYSPQ) are disordered. Residues 56 to 66 (PNVTGSLHMGH) carry the 'HIGH' region motif. The 'KMSKS' region signature appears at 568-572 (KMSKS). Lys571 lines the ATP pocket. The stretch at 896 to 965 (LIDKATELDR…IEQQATIAAL (70 aa)) forms a coiled coil.

This sequence belongs to the class-I aminoacyl-tRNA synthetase family. ValS type 1 subfamily. Monomer.

It localises to the cytoplasm. The catalysed reaction is tRNA(Val) + L-valine + ATP = L-valyl-tRNA(Val) + AMP + diphosphate. Catalyzes the attachment of valine to tRNA(Val). As ValRS can inadvertently accommodate and process structurally similar amino acids such as threonine, to avoid such errors, it has a 'posttransfer' editing activity that hydrolyzes mischarged Thr-tRNA(Val) in a tRNA-dependent manner. The polypeptide is Valine--tRNA ligase (Yersinia pestis).